A 348-amino-acid polypeptide reads, in one-letter code: Cyclic AMP-dependent transcription factor ATF-4 (348 aa).

A Glycyl lysine isopeptide (Lys-Gly) (interchain with G-Cter in SUMO2) cross-link involves residue Lys53. 2 disordered regions span residues 151–174 and 187–265; these read QGAPFTFFQPLPPSPGTLSSTPDH and PEGD…GEKM. Phosphoserine occurs at positions 211, 215, 220, 227, and 231. The BetaTrCP degron motif signature appears at 211 to 220; it reads SDNDSGICMS. Over residues 221 to 241 the composition is skewed to polar residues; the sequence is PDSSLGSPQDSPSTSRGSPNK. Pro232 is subject to 4-hydroxyproline. Residues Ser242 and Ser245 each carry the phosphoserine modification. Over residues 242–253 the composition is skewed to low complexity; that stretch reads SLLSPGALSGSS. Glycyl lysine isopeptide (Lys-Gly) (interchain with G-Cter in SUMO2) cross-links involve residues Lys256, Lys264, and Lys269. One can recognise a bZIP domain in the interval 275–338; the sequence is LDKKLKKMEQ…QYLKDQIEEV (64 aa). A basic motif region spans residues 277-297; it reads KKLKKMEQNKTAATRYRQKKR. The segment at 302–338 is interaction with GABBR1; it reads ALTGECKELEKKNEALKEKADSLAKEIQYLKDQIEEV. The interval 303–331 is leucine-zipper; it reads LTGECKELEKKNEALKEKADSLAKEIQYL. Lys308 carries the post-translational modification N6-acetyllysine.

This sequence belongs to the bZIP family. Binds DNA as a homodimer and as a heterodimer. Heterodimer; heterodimerizes with CEBPB. Heterodimer; heterodimerizes with DDIT3/CHOP. Interacts with CEP290 (via an N-terminal region). Interacts with NEK6, DAPK2 (isoform 2) and ZIPK/DAPK3. Interacts (via its leucine zipper domain) with GABBR1 and GABBR2 (via their C-termini). Forms a heterodimer with TXLNG in osteoblasts. Interacts (via its DNA binding domain) with FOXO1 (C-terminal half); the interaction occurs in osteoblasts and regulates glucose homeostasis through suppression of beta-cell proliferation and a decrease in insulin production. Interacts with SATB2; the interaction results in enhanced DNA binding and transactivation by these transcription factors. Interacts with ABRAXAS2. Interacts with TRIB3, inhibiting the transactivation activity of ATF4. Interacts with DISC1; which inhibits ATF4 transcription factor activity by disrupting ATF4 dimerization and DNA-binding. Interacts with EP300/p300; EP300/p300 stabilizes ATF4 and increases its transcriptional activity independently of its catalytic activity by preventing its ubiquitination. In terms of processing, ubiquitinated by SCF(BTRC) in response to mTORC1 signal, followed by proteasomal degradation and leading to down-regulate expression of SIRT4. Interaction with EP300/p300 inhibits ubiquitination by SCF(BTRC). Phosphorylation at Ser-242 by RPS6KA3/RSK2 in osteoblasts enhances transactivation activity and promotes osteoblast differentiation. Phosphorylated on the betaTrCP degron motif at Ser-215, followed by phosphorylation at Ser-220, Ser-227, Ser-231 and Ser-245, promoting interaction with BTRC and ubiquitination. Phosphorylation is promoted by mTORC1. Phosphorylation at Ser-211 by CK2 decreases its stability. Phosphorylated by NEK6. Post-translationally, hydroxylated by PHD3, leading to decreased protein stability.

Its subcellular location is the nucleus. The protein localises to the nucleus speckle. It is found in the cytoplasm. The protein resides in the cell membrane. It localises to the cytoskeleton. Its subcellular location is the microtubule organizing center. The protein localises to the centrosome. Transcription factor that binds the cAMP response element (CRE) (consensus: 5'-GTGACGT[AC][AG]-3') and displays two biological functions, as regulator of metabolic and redox processes under normal cellular conditions, and as master transcription factor during integrated stress response (ISR). Binds to asymmetric CRE's as a heterodimer and to palindromic CRE's as a homodimer. Core effector of the ISR, which is required for adaptation to various stress such as endoplasmic reticulum (ER) stress, amino acid starvation, mitochondrial stress or oxidative stress. During ISR, ATF4 translation is induced via an alternative ribosome translation re-initiation mechanism in response to EIF2S1/eIF-2-alpha phosphorylation, and stress-induced ATF4 acts as a master transcription factor of stress-responsive genes in order to promote cell recovery. Promotes the transcription of genes linked to amino acid sufficiency and resistance to oxidative stress to protect cells against metabolic consequences of ER oxidation. Activates the transcription of NLRP1, possibly in concert with other factors in response to ER stress. Activates the transcription of asparagine synthetase (ASNS) in response to amino acid deprivation or ER stress. However, when associated with DDIT3/CHOP, the transcriptional activation of the ASNS gene is inhibited in response to amino acid deprivation. Together with DDIT3/CHOP, mediates programmed cell death by promoting the expression of genes involved in cellular amino acid metabolic processes, mRNA translation and the terminal unfolded protein response (terminal UPR), a cellular response that elicits programmed cell death when ER stress is prolonged and unresolved. Activates the expression of COX7A2L/SCAF1 downstream of the EIF2AK3/PERK-mediated unfolded protein response, thereby promoting formation of respiratory chain supercomplexes and increasing mitochondrial oxidative phosphorylation. Together with DDIT3/CHOP, activates the transcription of the IRS-regulator TRIB3 and promotes ER stress-induced neuronal cell death by regulating the expression of BBC3/PUMA in response to ER stress. May cooperate with the UPR transcriptional regulator QRICH1 to regulate ER protein homeostasis which is critical for cell viability in response to ER stress. In the absence of stress, ATF4 translation is at low levels and it is required for normal metabolic processes such as embryonic lens formation, fetal liver hematopoiesis, bone development and synaptic plasticity. Acts as a regulator of osteoblast differentiation in response to phosphorylation by RPS6KA3/RSK2: phosphorylation in osteoblasts enhances transactivation activity and promotes expression of osteoblast-specific genes and post-transcriptionally regulates the synthesis of Type I collagen, the main constituent of the bone matrix. Cooperates with FOXO1 in osteoblasts to regulate glucose homeostasis through suppression of beta-cell production and decrease in insulin production. Activates transcription of SIRT4. Regulates the circadian expression of the core clock component PER2 and the serotonin transporter SLC6A4. Binds in a circadian time-dependent manner to the cAMP response elements (CRE) in the SLC6A4 and PER2 promoters and periodically activates the transcription of these genes. Mainly acts as a transcriptional activator in cellular stress adaptation, but it can also act as a transcriptional repressor: acts as a regulator of synaptic plasticity by repressing transcription, thereby inhibiting induction and maintenance of long-term memory. Regulates synaptic functions via interaction with DISC1 in neurons, which inhibits ATF4 transcription factor activity by disrupting ATF4 dimerization and DNA-binding. The chain is Cyclic AMP-dependent transcription factor ATF-4 from Bos taurus (Bovine).